Reading from the N-terminus, the 190-residue chain is MRKLEERIMKDGLVLPGNILKVDRFINHMIDPVLFEDLANEFYEKFKDKKINKILTIEVSGIAIAYACGIRFNCPVVFAKKTSSKTLGDNCYRTEVFSFTKNRSYEVMVSKEYLDEKDHVLLIDDFLANGKALEGLIDICSQANATVEGIGILIEKVFQKGGENLRRQGYTIESLARIKGFTDDSVIFED.

Xanthine-binding residues include leucine 20 and asparagine 27. Residue 128 to 132 (ANGKA) coordinates 5-phospho-alpha-D-ribose 1-diphosphate. Residue lysine 156 coordinates xanthine.

Belongs to the purine/pyrimidine phosphoribosyltransferase family. Xpt subfamily. As to quaternary structure, homodimer.

Its subcellular location is the cytoplasm. The enzyme catalyses XMP + diphosphate = xanthine + 5-phospho-alpha-D-ribose 1-diphosphate. The protein operates within purine metabolism; XMP biosynthesis via salvage pathway; XMP from xanthine: step 1/1. In terms of biological role, converts the preformed base xanthine, a product of nucleic acid breakdown, to xanthosine 5'-monophosphate (XMP), so it can be reused for RNA or DNA synthesis. This chain is Xanthine phosphoribosyltransferase, found in Finegoldia magna (strain ATCC 29328 / DSM 20472 / WAL 2508) (Peptostreptococcus magnus).